Reading from the N-terminus, the 251-residue chain is Vacuolar protein sorting-associated protein 37D (251 aa).

The VPS37 C-terminal domain occupies 93-182 (AENCADKLQR…RRRERSAQPA (90 aa)). A disordered region spans residues 174 to 251 (RRERSAQPAP…RPSQPEPPHR (78 aa)). A compositionally biased stretch (pro residues) spans 221–251 (PVPPLKGSPGCPLGPAPLLSPRPSQPEPPHR).

The protein belongs to the VPS37 family. As to quaternary structure, component of the ESCRT-I complex (endosomal sorting complex required for transport I) which consists of TSG101, VPS28, a VPS37 protein (VPS37A to -D) and MVB12A or MVB12B in a 1:1:1:1 stoichiometry. Interacts with TSG101 and MVB12A. Component of the ESCRT-I complex (endosomal sorting complex required for transport I) which consists of TSG101, VPS28, a VPS37 protein (VPS37A to -D) and UBAP1 in a 1:1:1:1 stoichiometry.

The protein localises to the late endosome membrane. Component of the ESCRT-I complex, a regulator of vesicular trafficking process. Required for the sorting of endocytic ubiquitinated cargos into multivesicular bodies. May be involved in cell growth and differentiation. The chain is Vacuolar protein sorting-associated protein 37D from Homo sapiens (Human).